Reading from the N-terminus, the 109-residue chain is Sperm-specific class P protein 19 (109 aa).

Residues 1–109 (MSLTADPPAC…TVTIPMSATA (109 aa)) enclose the MSP domain.

In terms of assembly, monomer. In terms of tissue distribution, expressed at higher level in testis.

This chain is Sperm-specific class P protein 19 (ssp-19), found in Caenorhabditis elegans.